Consider the following 508-residue polypeptide: WD repeat-containing protein JIP5 (508 aa).

WD repeat units follow at residues 62-105 (EARK…WRTK), 106-145 (RHKGSVRALAIDHDGKHVYTIGADNVLKKADTHSGKVVKK), 149-188 (DGGSKVTKLVKSATHDFLVMGDEVGTIVVLDSNDLTTKNT), 193-233 (HGGD…MKQP), 253-294 (DQED…LEDQ), and 345-382 (SGLDEVGMLDLDFEYRLVSGGMDKLKIWEVPKEENSDS). A disordered region spans residues 376–508 (KEENSDSDSD…SHGITKFDGL (133 aa)). Over residues 380–393 (SDSDSDSDINDDSE) the composition is skewed to acidic residues. The span at 407–419 (ELGSGSESEVESD) shows a compositional bias: low complexity. A WD 7 repeat occupies 431–472 (CTGSDLPGDIEGSEGENNSNDDDNHDDREELWKELDQPTSDE). Over residues 441-454 (EGSEGENNSNDDDN) the composition is skewed to acidic residues. Positions 455-466 (HDDREELWKELD) are enriched in basic and acidic residues. Residues 478 to 492 (KRSLKVKDKKNKKFK) show a composition bias toward basic residues.

It belongs to the WD repeat WDR55 family.

The protein resides in the nucleus. Its subcellular location is the nucleolus. The sequence is that of WD repeat-containing protein JIP5 (JIP5) from Candida glabrata (strain ATCC 2001 / BCRC 20586 / JCM 3761 / NBRC 0622 / NRRL Y-65 / CBS 138) (Yeast).